The chain runs to 549 residues: Leiomodin-2 (549 aa).

Residues 1 to 42 (MSTFGYRRGLSKYESIDEDELLASLTAEELKELERELEDIEP) form a tropomyosin-binding region. The interaction with tropomyosin alpha stretch occupies residues 1 to 47 (MSTFGYRRGLSKYESIDEDELLASLTAEELKELERELEDIEPDRNLP). Interaction with actin stretches follow at residues 1–164 (MSTF…PDNS), 165–499 (KPKT…KEIK), and 523–542 (AHEN…LRRV). Phosphoserine occurs at positions 11, 15, and 24. Disordered regions lie at residues 91–166 (KLAE…NSKP), 179–200 (TNGN…HPCG), 358–455 (MDKQ…PGKK), and 469–534 (ESAQ…IRGS). Acidic residues-rich tracts occupy residues 95 to 105 (EDKEESEEELI) and 113 to 143 (VSEE…EEVT). Composition is skewed to polar residues over residues 150-163 (INGT…NPDN) and 179-192 (TNGN…NTES). A compositionally biased stretch (basic and acidic residues) spans 358–376 (MDKQRQKRMQEQKQQEGHD). The span at 390–401 (TPGSSPYASPRQ) shows a compositional bias: polar residues. A Phosphoserine modification is found at serine 406. Pro residues predominate over residues 420 to 452 (PPSPVAPPPPPPPPPLPPHMLPPPPPPPAPPLP). Positions 457–515 (ITRNIAEVIKQQESAQRALQNGQRKKKGKKVKKQPNNILKEIKNSLRSVQEKKMEESSR) form a coiled coil. The segment covering 469–478 (ESAQRALQNG) has biased composition (polar residues). Basic residues predominate over residues 479 to 489 (QRKKKGKKVKK). A compositionally biased stretch (basic and acidic residues) spans 496-514 (KEIKNSLRSVQEKKMEESS). A WH2 domain is found at 523–542 (AHENLMEAIRGSSIRQLRRV).

This sequence belongs to the tropomodulin family. Can bind at least three actin monomers and thereby provides a nucleus for actin filament formation. Interacts (via N-terminus) with tropomyosin alpha (TPM1) (via N-terminus). May also interact with TPM2 (via N-terminus). Interacts with FLII.

Its subcellular location is the cytoplasm. It is found in the myofibril. It localises to the sarcomere. The protein localises to the m line. The protein resides in the cytoskeleton. Mediates nucleation of actin filaments and thereby promotes actin polymerization. Plays a role in the regulation of actin filament length. Required for normal sarcomere organization in the heart, and for normal heart function. This Rattus norvegicus (Rat) protein is Leiomodin-2 (Lmod2).